The following is a 159-amino-acid chain: Phosphopantetheine adenylyltransferase (159 aa).

Threonine 8 provides a ligand contact to substrate. Residues 8 to 9 (TF) and histidine 16 contribute to the ATP site. 3 residues coordinate substrate: lysine 40, threonine 72, and arginine 86. Residues 87-89 (GLR), glutamate 97, and 122-128 (YSFLSSS) each bind ATP.

The protein belongs to the bacterial CoaD family. As to quaternary structure, homohexamer. Mg(2+) serves as cofactor.

Its subcellular location is the cytoplasm. It carries out the reaction (R)-4'-phosphopantetheine + ATP + H(+) = 3'-dephospho-CoA + diphosphate. Its pathway is cofactor biosynthesis; coenzyme A biosynthesis; CoA from (R)-pantothenate: step 4/5. Functionally, reversibly transfers an adenylyl group from ATP to 4'-phosphopantetheine, yielding dephospho-CoA (dPCoA) and pyrophosphate. The protein is Phosphopantetheine adenylyltransferase of Prochlorococcus marinus subsp. pastoris (strain CCMP1986 / NIES-2087 / MED4).